Here is a 255-residue protein sequence, read N- to C-terminus: Indole-3-glycerol phosphate synthase (255 aa).

This sequence belongs to the TrpC family.

It carries out the reaction 1-(2-carboxyphenylamino)-1-deoxy-D-ribulose 5-phosphate + H(+) = (1S,2R)-1-C-(indol-3-yl)glycerol 3-phosphate + CO2 + H2O. Its pathway is amino-acid biosynthesis; L-tryptophan biosynthesis; L-tryptophan from chorismate: step 4/5. In Shouchella clausii (strain KSM-K16) (Alkalihalobacillus clausii), this protein is Indole-3-glycerol phosphate synthase.